A 37-amino-acid chain; its full sequence is Large ribosomal subunit protein bL36 (37 aa).

This sequence belongs to the bacterial ribosomal protein bL36 family.

This is Large ribosomal subunit protein bL36 (rpmJ) from Mycoplasmoides gallisepticum (strain R(low / passage 15 / clone 2)) (Mycoplasma gallisepticum).